A 93-amino-acid polypeptide reads, in one-letter code: Co-chaperonin GroES (93 aa).

This sequence belongs to the GroES chaperonin family. Heptamer of 7 subunits arranged in a ring. Interacts with the chaperonin GroEL.

The protein resides in the cytoplasm. Its function is as follows. Together with the chaperonin GroEL, plays an essential role in assisting protein folding. The GroEL-GroES system forms a nano-cage that allows encapsulation of the non-native substrate proteins and provides a physical environment optimized to promote and accelerate protein folding. GroES binds to the apical surface of the GroEL ring, thereby capping the opening of the GroEL channel. The sequence is that of Co-chaperonin GroES from Geobacillus kaustophilus (strain HTA426).